The sequence spans 517 residues: ADP-ribosylation factor GTPase-activating protein 3 (517 aa).

Positions 10 to 126 (LTIFKRLRSV…IKALASQATR (117 aa)) constitute an Arf-GAP domain. A C4-type zinc finger spans residues 25–48 (CFDCGAKNPSWASITYGVFLCIDC). Positions 139–200 (VPPSSPPPKE…EQGPSVEGLN (62 aa)) are disordered. Over residues 159–176 (EVSSTGWASAQPEPSLTP) the composition is skewed to polar residues. Serine 231 bears the Phosphoserine mark. The stretch at 243–263 (NEIEKQAQAVDKMNAQEDLLS) forms a coiled coil. 2 positions are modified to phosphoserine: serine 271 and serine 275. Basic and acidic residues predominate over residues 291-305 (EKMNMSGKKKAESER). Disordered regions lie at residues 291 to 349 (EKMN…SDDS) and 362 to 422 (MELR…QKKF). The span at 312 to 333 (NSRSGISHSVTSDMQTIEQETP) shows a compositional bias: polar residues. The residue at position 371 (serine 371) is a Phosphoserine. The segment covering 379–390 (YWKKETIKDTDP) has biased composition (basic and acidic residues). Phosphoserine is present on residues serine 429, serine 452, serine 454, serine 456, serine 458, and serine 459.

It localises to the cytoplasm. It is found in the golgi apparatus membrane. With respect to regulation, GAP activity stimulated by phosphatidylinositol 4,5-bisphosphate (PIP2). Its function is as follows. GTPase-activating protein (GAP) for ADP ribosylation factor 1 (ARF1). Hydrolysis of ARF1-bound GTP may lead to dissociation of coatomer from Golgi-derived membranes to allow fusion with target membranes. The protein is ADP-ribosylation factor GTPase-activating protein 3 of Bos taurus (Bovine).